We begin with the raw amino-acid sequence, 317 residues long: Olfactory receptor 6P1 (317 aa).

Residues 1–25 lie on the Extracellular side of the membrane; it reads MRNLSGGHVEEFVLVGFPTTPPLQL. A glycan (N-linked (GlcNAc...) asparagine) is linked at Asn3. The helical transmembrane segment at 26-46 threads the bilayer; sequence LLFVLFFAIYLLTLLENALIV. Over 47–54 the chain is Cytoplasmic; the sequence is FTIWLAPS. Residues 55–75 form a helical membrane-spanning segment; sequence LHRPMYFFLGHLSFLELWYIN. Residues 76–99 lie on the Extracellular side of the membrane; that stretch reads VTIPRLLAAFLTQDGRVSYVGCMT. The cysteines at positions 97 and 189 are disulfide-linked. The helical transmembrane segment at 100 to 120 threads the bilayer; that stretch reads QLYFFIALACTECVLLAVMAY. Residues 121-139 lie on the Cytoplasmic side of the membrane; the sequence is DRYLAICGPLLYPSLMPSS. The chain crosses the membrane as a helical span at residues 140–160; that stretch reads LATRLAAASWGSGFFSSMMKL. The Extracellular portion of the chain corresponds to 161 to 197; it reads LFISQLSYCGPNIINHFFCDISPLLNLTCSDKEQAEL. Asn186 carries an N-linked (GlcNAc...) asparagine glycan. Residues 198 to 217 form a helical membrane-spanning segment; the sequence is VDFLLALVMILLPLLAVVSS. The Cytoplasmic segment spans residues 218–237; it reads YTAIIAAILRIPTSRGRHKA. The helical transmembrane segment at 238–258 threads the bilayer; it reads FSTCAAHLAVVVIYYSSTLFT. At 259 to 271 the chain is on the extracellular side; the sequence is YARPRAMYTFNHN. A helical membrane pass occupies residues 272–292; sequence KIISVLYTIIVPFFNPAIYCL. The Cytoplasmic portion of the chain corresponds to 293-317; the sequence is RNKEVKEAFRKTVMGRCHYPRDVQD.

This sequence belongs to the G-protein coupled receptor 1 family.

It is found in the cell membrane. Functionally, odorant receptor. This is Olfactory receptor 6P1 (OR6P1) from Homo sapiens (Human).